The following is a 426-amino-acid chain: ORC1-type DNA replication protein 1 (426 aa).

Residues 62 to 66 (VGKTL), Y211, and R223 contribute to the ATP site.

Belongs to the CDC6/cdc18 family.

In terms of biological role, involved in regulation of DNA replication. The protein is ORC1-type DNA replication protein 1 (cdc6a) of Haloarcula marismortui (strain ATCC 43049 / DSM 3752 / JCM 8966 / VKM B-1809) (Halobacterium marismortui).